Consider the following 273-residue polypeptide: Inactive endochitinase At2g43600 (273 aa).

The N-terminal stretch at 1 to 22 (MTIKNVIFSLFILAILAETVFS) is a signal peptide. A Chitin-binding type-1 domain is found at 23-61 (QNCMDTSCPGLKECCSRWGFCGTKDEYCGFFCFSGPCNI). Disulfide bonds link cysteine 25/cysteine 37, cysteine 30/cysteine 43, cysteine 36/cysteine 50, and cysteine 54/cysteine 59. A catalytic region spans residues 78-273 (GKIETVITSA…GVTPDQGLDC (196 aa)). Residue asparagine 99 is glycosylated (N-linked (GlcNAc...) asparagine).

The protein belongs to the glycosyl hydrolase 19 family. Chitinase class I subfamily.

This chain is Inactive endochitinase At2g43600, found in Arabidopsis thaliana (Mouse-ear cress).